The following is a 204-amino-acid chain: Thymidylate kinase (204 aa).

ATP is bound at residue 7–14 (GGEGVGKT).

Belongs to the thymidylate kinase family.

It carries out the reaction dTMP + ATP = dTDP + ADP. In terms of biological role, phosphorylation of dTMP to form dTDP in both de novo and salvage pathways of dTTP synthesis. The protein is Thymidylate kinase of Synechococcus sp. (strain JA-3-3Ab) (Cyanobacteria bacterium Yellowstone A-Prime).